Consider the following 349-residue polypeptide: ATPase GET3 (349 aa).

26–33 (KGGVGKTT) serves as a coordination point for ATP. The active site involves Asp57. Residues Glu242 and Asn269 each coordinate ATP. Residues Cys281 and Cys284 each coordinate Zn(2+).

Belongs to the arsA ATPase family. As to quaternary structure, homodimer. Component of the Golgi to ER traffic (GET) complex, which is composed of GET1, GET2 and GET3. Within the complex, GET1 and GET2 form a heterotetramer which is stabilized by phosphatidylinositol binding and which binds to the GET3 homodimer. Interacts with the chloride channel protein GEF1.

It localises to the cytoplasm. The protein resides in the endoplasmic reticulum. It is found in the golgi apparatus. In terms of biological role, ATPase required for the post-translational delivery of tail-anchored (TA) proteins to the endoplasmic reticulum. Recognizes and selectively binds the transmembrane domain of TA proteins in the cytosol. This complex then targets to the endoplasmic reticulum by membrane-bound receptors GET1 and GET2, where the tail-anchored protein is released for insertion. This process is regulated by ATP binding and hydrolysis. ATP binding drives the homodimer towards the closed dimer state, facilitating recognition of newly synthesized TA membrane proteins. ATP hydrolysis is required for insertion. Subsequently, the homodimer reverts towards the open dimer state, lowering its affinity for the GET1-GET2 receptor, and returning it to the cytosol to initiate a new round of targeting. Cooperates with the HDEL receptor ERD2 to mediate the ATP-dependent retrieval of resident ER proteins that contain a C-terminal H-D-E-L retention signal from the Golgi to the ER. Involved in low-level resistance to the oxyanions arsenite and arsenate, and in heat tolerance. This chain is ATPase GET3, found in Candida tropicalis (strain ATCC MYA-3404 / T1) (Yeast).